A 373-amino-acid chain; its full sequence is Putative protein YfkA (373 aa).

Residues 26 to 256 (YGDMQLTNVE…DIRDENTWML (231 aa)) form the Radical SAM core domain. The [4Fe-4S] cluster site is built by cysteine 42, cysteine 46, and cysteine 49.

It belongs to the radical SAM superfamily. [4Fe-4S] cluster serves as cofactor.

The polypeptide is Putative protein YfkA (yfkA) (Bacillus subtilis (strain 168)).